The chain runs to 517 residues: MDIVGGQNLRQMWDDLAGVYGDKTALIFESCEGIVRQFSYASLNEEINRTANLFYSLGIRKGDRVALHLDNCPEFIFCWFGLAKIGAIMVPINARLLGEESAWILQNSQVSLLVTSVQFYPMYREIHQDNSTPLNHICLIGEQLPADDGVSHFSQLQARQSATLCYTPALSTDDTAEILFTSGTTSRPKGVVITHYNLRFAGYYSAWQIALRDDDVYMTVMPAFHIDCQCTAAMPAFSAGSTFVLLEKYSARAFWDQVRRYQATVTECIPMMIRTLMVQPAAPTDRQHHLREVMFYLNLSAQEKDAFTERFGVRLLTSYGMTETIVGIIGDRPGDKRRWPSIGRVGFSYEAEIRDDQNRPLPAGEIGEICIKGIPGKTIFKEYYMQPEATAGALEPEGWLHTGDSGYQDEDGYFYFVDRRCNMIKRGGENVSCVELENIISAHPKIQDIVVVGIKDAIRDEAIKAFIVLNEGETLSEAEFFSFCENNMAKFKVPSFMEIRTDLPRNCSGKIIKKNLK.

This sequence belongs to the ATP-dependent AMP-binding enzyme family.

The enzyme catalyses 4-(trimethylamino)butanoate + ATP + CoA = 4-(trimethylamino)butanoyl-CoA + AMP + diphosphate. It carries out the reaction crotonobetaine + ATP + CoA = crotonobetainyl-CoA + AMP + diphosphate. The catalysed reaction is (R)-carnitine + ATP + CoA = (R)-carnitinyl-CoA + AMP + diphosphate. It functions in the pathway amine and polyamine metabolism; carnitine metabolism. In terms of biological role, catalyzes the transfer of CoA to carnitine, generating the initial carnitinyl-CoA needed for the CaiB reaction cycle. Also has activity toward crotonobetaine and gamma-butyrobetaine. This is Crotonobetaine/carnitine--CoA ligase from Salmonella paratyphi C (strain RKS4594).